The sequence spans 472 residues: Methylenetetrahydrofolate--tRNA-(uracil-5-)-methyltransferase TrmFO (472 aa).

FAD is bound at residue 10–15; that stretch reads GGGLAG.

The protein belongs to the MnmG family. TrmFO subfamily. The cofactor is FAD.

It is found in the cytoplasm. The catalysed reaction is uridine(54) in tRNA + (6R)-5,10-methylene-5,6,7,8-tetrahydrofolate + NADH + H(+) = 5-methyluridine(54) in tRNA + (6S)-5,6,7,8-tetrahydrofolate + NAD(+). It catalyses the reaction uridine(54) in tRNA + (6R)-5,10-methylene-5,6,7,8-tetrahydrofolate + NADPH + H(+) = 5-methyluridine(54) in tRNA + (6S)-5,6,7,8-tetrahydrofolate + NADP(+). In terms of biological role, catalyzes the folate-dependent formation of 5-methyl-uridine at position 54 (M-5-U54) in all tRNAs. The polypeptide is Methylenetetrahydrofolate--tRNA-(uracil-5-)-methyltransferase TrmFO (Mesorhizobium japonicum (strain LMG 29417 / CECT 9101 / MAFF 303099) (Mesorhizobium loti (strain MAFF 303099))).